The sequence spans 641 residues: Epithelial sodium channel subunit beta (641 aa).

The Cytoplasmic segment spans residues 1-50; the sequence is MHVKKYLLKCLHRLQKGPGYTYKELLVWYCDNTNTHGPKRIIREGPKKKA. A helical transmembrane segment spans residues 51–71; the sequence is MWFLITLLFASLVCWQWGVFI. Topologically, residues 72–533 are extracellular; the sequence is KTYLSWEVSV…GGQFGFWMGG (462 aa). Disulfide bonds link Cys98–Cys273, Cys185–Cys190, Cys197–Cys204, Cys250–Cys257, Cys362–Cys449, Cys387–Cys445, Cys391–Cys441, Cys400–Cys427, and Cys402–Cys416. Asn141 carries an N-linked (GlcNAc...) asparagine glycan. N-linked (GlcNAc...) asparagine glycans are attached at residues Asn261 and Asn379. A helical membrane pass occupies residues 534–554; sequence SVLCLIEFAEIIIDFVWITII. The Cytoplasmic portion of the chain corresponds to 555–641; sequence KLVALAKGLR…VESDSEGDAV (87 aa). The interval 596–641 is disordered; the sequence is GHRSPDAEAYPDEQALPIPGTPPPNYDSLRLQPLDVVESDSEGDAV. A PY motif; recruits WW domain-containing proteins and is thereby required for ubiquitination and inhibition of the channel by NEDD4 and NEDD4L motif is present at residues 617-621; the sequence is PPPNY. Acidic residues predominate over residues 632 to 641; the sequence is VESDSEGDAV. A phosphoserine mark is found at Ser634 and Ser636.

This sequence belongs to the amiloride-sensitive sodium channel (TC 1.A.6) family. SCNN1B subfamily. In terms of assembly, component of the heterotrimeric epithelial sodium channel (ENaC) composed of an alpha/SCNN1A, a beta/SCNN1B and a gamma/SCNN1G subunit. Interacts with WWP1 (via WW domains). Interacts with WWP2 (via WW domains); inhibits the channel. Interacts with the full-length immature form of PCSK9 (pro-PCSK9). Interacts (N-glycosylated) with BPIFA1; the interaction is direct and inhibits the proteolytic processing of SCNN1A and SCNN1G and the activation of ENaC. Ubiquitinated. Can be ubiquitinated at multiple sites and undergo monoubiquitination and polyubiquitination. Ubiquitination by NEDD4 or NEDD4L inhibits the ENaC channel through endocytosis, intracellular retention and degradation of its individual subunits. However, some studies could not confirm the ubiquitination of this subunit of the ENaC. Post-translationally, phosphorylated on serine and threonine residues. Aldosterone and insulin increase the basal level of phosphorylation. In terms of processing, N-glycosylated. N-glycosylation is required for interaction with BPIFA1.

It is found in the apical cell membrane. The protein localises to the cytoplasmic vesicle membrane. The catalysed reaction is Na(+)(in) = Na(+)(out). Its activity is regulated as follows. Originally identified and characterized by its inhibition by the diuretic drug amiloride. Its function is as follows. This is one of the three pore-forming subunits of the heterotrimeric epithelial sodium channel (ENaC), a critical regulator of sodium balance and fluid homeostasis. ENaC operates in epithelial tissues, where it mediates the electrodiffusion of sodium ions from extracellular fluid through the apical membrane of cells, with water following osmotically. It plays a key role in maintaining sodium homeostasis through electrogenic sodium reabsorption in the kidneys. Additionally, ENaC is essential for airway surface liquid homeostasis, which is crucial for proper mucus clearance. This is Epithelial sodium channel subunit beta from Oryctolagus cuniculus (Rabbit).